Reading from the N-terminus, the 243-residue chain is Ras-related protein Rab-12 (243 aa).

At M1 the chain carries N-acetylmethionine. A disordered region spans residues 1 to 36 (MDPSAALHRRPAGGSLGAVSPALSGGQARRRKQPPR). S15, S20, and S24 each carry phosphoserine. GTP is bound by residues G51, V52, G53, K54, T55, S72, and T73. T55 contacts Mg(2+). 2 consecutive short sequence motifs (switch) follow at residues 64–78 (DTFCEACKSTVGVDF) and 96–113 (DTAGQERFNSITSAYYRS). 2 residues coordinate Mg(2+): T73 and D96. Residue G99 participates in GTP binding. S105 carries the post-translational modification Phosphoserine; by LRRK2. GTP is bound by residues N154, K155, D157, S185, A186, and K187. 2 S-geranylgeranyl cysteine lipidation sites follow: C242 and C243.

The protein belongs to the small GTPase superfamily. Rab family. Interacts with RABIF and OPTN. Interacts with LRRK2; interaction facilitates phosphorylation of Ser-105. Interacts with GDI1, GDI2, CHM and CHML; these interactions are disrupted by phosphorylation on Ser-105. Interacts with RILPL1 and RILPL2; these interactions are dependent on phosphorylation of Ser-105. The cofactor is Mg(2+). Phosphorylation of Ser-105 in the switch II region by LRRK2 prevents the association of RAB regulatory proteins, including CHM, CHML and RAB GDP dissociation inhibitors GDI1 and GDI2. Ubiquitously expressed.

The protein localises to the recycling endosome membrane. Its subcellular location is the lysosome membrane. The protein resides in the golgi apparatus membrane. It is found in the cytoplasmic vesicle. It localises to the autophagosome. It catalyses the reaction GTP + H2O = GDP + phosphate + H(+). Its activity is regulated as follows. Regulated by guanine nucleotide exchange factors (GEFs) including DENND3 which promote the exchange of bound GDP for free GTP. Regulated by GTPase activating proteins (GAPs) which increase the GTP hydrolysis activity. Inhibited by GDP dissociation inhibitors (GDIs). Functionally, the small GTPases Rab are key regulators of intracellular membrane trafficking, from the formation of transport vesicles to their fusion with membranes. Rabs cycle between an inactive GDP-bound form and an active GTP-bound form that is able to recruit to membranes different set of downstream effectors directly responsible for vesicle formation, movement, tethering and fusion. RAB12 may play a role in protein transport from recycling endosomes to lysosomes regulating, for instance, the degradation of the transferrin receptor. Involved in autophagy. This is Ras-related protein Rab-12 from Mus musculus (Mouse).